An 850-amino-acid chain; its full sequence is Pentatricopeptide repeat-containing protein At5g16860 (850 aa).

PPR repeat units follow at residues 58 to 88 (TLNL…FPPS), 91 to 125 (GVYH…SWTP), 126 to 160 (DNYT…GFIS), 161 to 191 (NVFV…MSVW), 192 to 227 (DVVS…GCRP), 228 to 262 (DNIT…EMIQ), 263 to 293 (NMFV…MSVK), 294 to 328 (DVVS…KIKM), 329 to 363 (DVVT…GIKP), 364 to 398 (NEVT…PIDL), 406 to 436 (ENMV…LSPK), 439 to 473 (DVVT…DCQT), 476 to 510 (NAFT…QQNA), 512 to 542 (PLFV…MMAK), 543 to 577 (NEVT…GFKL), 578 to 608 (DGVT…MKTV), and 614 to 644 (GPEH…MPME). The segment at 649–724 (VWVAFLSCCR…RPGCSWVEGI (76 aa)) is type E motif. The segment at 725–755 (KGTTTFFVGDKTHPHAKEIYQVLLDHMQRIK) is type E(+) motif. The segment at 756–850 (DIGYVPETGF…NGSCSCKGYW (95 aa)) is type DYW motif.

Belongs to the PPR family. PCMP-H subfamily.

The protein is Pentatricopeptide repeat-containing protein At5g16860 (PCMP-H92) of Arabidopsis thaliana (Mouse-ear cress).